A 469-amino-acid polypeptide reads, in one-letter code: 3-isopropylmalate dehydratase large subunit (469 aa).

[4Fe-4S] cluster contacts are provided by C350, C410, and C413.

Belongs to the aconitase/IPM isomerase family. LeuC type 1 subfamily. Heterodimer of LeuC and LeuD. [4Fe-4S] cluster serves as cofactor.

The enzyme catalyses (2R,3S)-3-isopropylmalate = (2S)-2-isopropylmalate. The protein operates within amino-acid biosynthesis; L-leucine biosynthesis; L-leucine from 3-methyl-2-oxobutanoate: step 2/4. Its function is as follows. Catalyzes the isomerization between 2-isopropylmalate and 3-isopropylmalate, via the formation of 2-isopropylmaleate. This is 3-isopropylmalate dehydratase large subunit from Brucella anthropi (strain ATCC 49188 / DSM 6882 / CCUG 24695 / JCM 21032 / LMG 3331 / NBRC 15819 / NCTC 12168 / Alc 37) (Ochrobactrum anthropi).